Consider the following 233-residue polypeptide: MKFEYPLIPATLLRRYKRFLADVELSDGSTITVHCPNTGSMRNCIVENSPCWLLDSANPKRKYRYSLERVTTPTGAVAGINSASANGLVIAAIENGVISELQGYDELAREQRYGDEKSRIDILLSKPEEQCYIEVKSVTLEEGKGEGFFPDAVSTRGQKHLRELMAMRSQGHRAVLFFCVQHSGITKVAAAEHIDPAYAALFKQAVNEGVEVIAYGVDLGIEGSVITKKLKVV.

The protein belongs to the SfsA family.

This Saccharophagus degradans (strain 2-40 / ATCC 43961 / DSM 17024) protein is Sugar fermentation stimulation protein homolog.